The sequence spans 632 residues: Golgin subfamily A member 8M (632 aa).

Positions 1 to 77 (MAEETQHNKL…SSATLKDLES (77 aa)) are disordered. Residues 38 to 50 (TNGSIPQTATSGG) are compositionally biased toward polar residues. 2 coiled-coil regions span residues 86-154 (LDSR…HMKR) and 209-421 (KLEQ…SLMA). The segment covering 352–362 (KQEERIQEQHK) has biased composition (basic and acidic residues). Disordered regions lie at residues 352–384 (KQEERIQEQHKSLQQLAKPQSVFEEPNNENKST), 422–456 (LPGEGHGGEHLDSEGEEAPQPMPSVPEDPESREAM), and 505–524 (DAALGGGHHQAGAQGGDEGE). Positions 508 to 520 (LGGGHHQAGAQGG) are enriched in gly residues.

Belongs to the GOLGA8 family.

The polypeptide is Golgin subfamily A member 8M (Homo sapiens (Human)).